Here is a 251-residue protein sequence, read N- to C-terminus: Probable transcriptional regulatory protein CT1665 (251 aa).

It belongs to the TACO1 family.

It is found in the cytoplasm. This Chlorobaculum tepidum (strain ATCC 49652 / DSM 12025 / NBRC 103806 / TLS) (Chlorobium tepidum) protein is Probable transcriptional regulatory protein CT1665.